Here is an 856-residue protein sequence, read N- to C-terminus: Mechanosensitive ion channel protein 6 (856 aa).

Disordered stretches follow at residues 45-86 (GEGN…DPPT) and 116-226 (RGLT…PFAA). Composition is skewed to basic and acidic residues over residues 70 to 85 (QQKDEGFEFRRGEDPP) and 129 to 140 (TKRDPVGRRDSR). Residues 155–168 (SGNNAPIQRSSSTL) show a composition bias toward polar residues. S211 carries the phosphoserine modification. A compositionally biased stretch (acidic residues) spans 217–226 (EEEEDDPFAA). The next 4 membrane-spanning stretches (helical) occupy residues 242 to 262 (IVLEWLSLILIIAGFVCTLAI), 283 to 303 (LVLICGRLVSSWIVKIVVFFI), 323 to 343 (AVQNCLWLGLVLLAWHFLFDE), and 360 to 380 (IFVCLLVGFLLWLVKTLLVKV). S462 bears the Phosphoserine mark. 2 helical membrane passes run 615-635 (MVNIVVGIIILVIWLIILGIT) and 651-671 (AFIFGNMCKIVFESIIYLFVI).

It belongs to the MscS (TC 1.A.23) family.

Its subcellular location is the membrane. Its function is as follows. Mechanosensitive channel that opens in response to stretch forces in the membrane lipid bilayer. The polypeptide is Mechanosensitive ion channel protein 6 (MSL6) (Arabidopsis thaliana (Mouse-ear cress)).